The sequence spans 402 residues: p-cumate 2,3-dioxygenase system, ferredoxin--NAD(+) reductase component (402 aa).

FAD-binding residues include Ala16, Lys51, Val83, Arg131, and Asp275.

Belongs to the FAD-dependent oxidoreductase family. As to quaternary structure, the p-cumate 2,3-dioxygenase multicomponent enzyme system is composed of an electron transfer component and a dioxygenase component (iron sulfur protein (ISP)). The electron transfer component is composed of a ferredoxin reductase (CmtAa) and a ferredoxin (CmtAd), and the dioxygenase component is formed of a large alpha subunit (CmtAb) and a small beta subunit (CmtAc). Requires FAD as cofactor.

The catalysed reaction is 2 reduced [2Fe-2S]-[ferredoxin] + NAD(+) + H(+) = 2 oxidized [2Fe-2S]-[ferredoxin] + NADH. Its pathway is aromatic compound metabolism; p-cumate degradation; acetaldehyde and pyruvate from p-cumate. Component of the p-cumate 2,3-dioxygenase multicomponent enzyme system which catalyzes the incorporation of both atoms of molecular oxygen into p-cumate to form cis-2,3-dihydroxy-2,3-dihydro-p-cumate. Ferredoxin reductase catalyzes the transfer of electrons from NADH to ferredoxin (CmtAd). The sequence is that of p-cumate 2,3-dioxygenase system, ferredoxin--NAD(+) reductase component from Pseudomonas putida (Arthrobacter siderocapsulatus).